The following is a 672-amino-acid chain: APC membrane recruitment protein 2 (672 aa).

Over residues 1 to 21 (METGRSRGGGAAVSERGGGAR) the composition is skewed to gly residues. Disordered regions lie at residues 1 to 23 (METGRSRGGGAAVSERGGGARAG), 74 to 360 (TMPS…DPSA), and 443 to 560 (MLSQ…DALC). The segment covering 142–158 (GSLASSSVAKSHSFFSL) has biased composition (low complexity). Ser154 carries the phosphoserine modification. Basic and acidic residues-rich tracts occupy residues 163-175 (GRSETGKGDHAEA) and 201-210 (RGKEEEEKAV). Phosphoserine occurs at positions 223, 227, and 244. The segment covering 230–254 (CVKEEPPRAARRPDSPGQDASRHAA) has biased composition (basic and acidic residues). The span at 255–269 (GEPAGGEQAPASAES) shows a compositional bias: low complexity. Ser284 is subject to Phosphoserine. Residues 289-303 (SRGEDAEGHRREEKP) show a composition bias toward basic and acidic residues. Residues 343–354 (ASAVPDPSSVDP) are compositionally biased toward low complexity. 2 positions are modified to phosphoserine: Ser356 and Ser359. Residues 446 to 457 (QTEDQGQGTQEG) are compositionally biased toward low complexity. 2 stretches are compositionally biased toward basic and acidic residues: residues 478–488 (RCGEAAKDMSS) and 502–516 (QQKEEPKHPEKEHQE).

Belongs to the Amer family. As to quaternary structure, interacts with APC.

The protein resides in the cell membrane. Its function is as follows. Negative regulator of the canonical Wnt signaling pathway involved in neuroectodermal patterning. Acts by specifically binding phosphatidylinositol 4,5-bisphosphate (PtdIns(4,5)P2), translocating to the cell membrane and interacting with key regulators of the canonical Wnt signaling pathway, such as components of the beta-catenin destruction complex. The chain is APC membrane recruitment protein 2 (Amer2) from Mus musculus (Mouse).